Consider the following 930-residue polypeptide: Short transient receptor potential channel 6 (930 aa).

Positions 1–27 are disordered; the sequence is MSQSPRFVTRRGGSLKAAPGAGTRRNE. Residues 1-437 lie on the Cytoplasmic side of the membrane; sequence MSQSPRFVTR…CSKMGKILRG (437 aa). ANK repeat units follow at residues 96-125, 131-160, 162-188, and 217-246; these read IEEE…SLNV, MGQN…LSRV, DALL…FAEG, and HDVT…RIER. The chain crosses the membrane as a helical span at residues 438–458; it reads PFMKFVAHAASFTIFLGLLVM. The Extracellular segment spans residues 459–486; the sequence is NAADRFEGTKLLPNETSTDNARQLFRMK. The helical transmembrane segment at 487–507 threads the bilayer; it reads TSCFSWMEMLIISWVIGMIWA. Residues 508–520 lie on the Cytoplasmic side of the membrane; it reads ECKEIWTQGPKEY. Residues 521–541 form a helical membrane-spanning segment; it reads LFELWNMLDFGMLAIFAASFI. Residues 542–591 lie on the Extracellular side of the membrane; sequence ARFMAFWHASKAQSIIDANDTLKDLTKVTLGDNVKYYNLARIKWDPTDPQ. The N-linked (GlcNAc...) asparagine glycan is linked to Asn560. Residues 592 to 612 form a helical membrane-spanning segment; it reads IISEGLYAIAVVLSFSRIAYI. Residues 613–635 lie on the Cytoplasmic side of the membrane; it reads LPANESFGPLQISLGRTVKDIFK. The helical transmembrane segment at 636–656 threads the bilayer; that stretch reads FMVIFIMVFVAFMIGMFNLYS. Residues 657–705 are Extracellular-facing; sequence YYIGAKQNEAFTTVEESFKTLFWAIFGLSEVKSVVINYNHKFIENIGYV. A helical transmembrane segment spans residues 706–726; that stretch reads LYGVYNVTMVIVLLNMLIAMI. The Cytoplasmic segment spans residues 727 to 930; the sequence is NSSFQEIEDD…LEPKLEESRR (204 aa). Residue Ser814 is modified to Phosphoserine.

Belongs to the transient receptor (TC 1.A.4) family. STrpC subfamily. TRPC6 sub-subfamily. As to quaternary structure, homodimer; forms channel complex. Interacts with MX1 and RNF24. Post-translationally, phosphorylated by FYN, leading to an increase of TRPC6 channel activity. N-glycosylated. In terms of tissue distribution, lung and brain.

Its subcellular location is the cell membrane. The catalysed reaction is Ca(2+)(in) = Ca(2+)(out). Forms a receptor-activated non-selective calcium permeant cation channel. Probably is operated by a phosphatidylinositol second messenger system activated by receptor tyrosine kinases or G-protein coupled receptors. Activated by diacylglycerol (DAG) in a membrane-delimited fashion, independently of protein kinase C. Seems not to be activated by intracellular calcium store depletion. This Mus musculus (Mouse) protein is Short transient receptor potential channel 6.